A 455-amino-acid chain; its full sequence is tRNA modification GTPase MnmE (455 aa).

Residues Arg-24, Glu-81, and Lys-121 each contribute to the (6S)-5-formyl-5,6,7,8-tetrahydrofolate site. Residues 217–378 form the TrmE-type G domain; it reads GMKVVIAGRP…LREHLKDCMG (162 aa). K(+) is bound at residue Asn-227. Residues 227-232, 246-252, 271-274, and 359-361 contribute to the GTP site; these read NAGKSS, TDIAGTT, DTAG, and SAR. Residue Ser-231 coordinates Mg(2+). Residues Thr-246, Ile-248, and Thr-251 each coordinate K(+). Thr-252 is a Mg(2+) binding site. Lys-455 provides a ligand contact to (6S)-5-formyl-5,6,7,8-tetrahydrofolate.

Belongs to the TRAFAC class TrmE-Era-EngA-EngB-Septin-like GTPase superfamily. TrmE GTPase family. In terms of assembly, homodimer. Heterotetramer of two MnmE and two MnmG subunits. The cofactor is K(+).

Its subcellular location is the cytoplasm. In terms of biological role, exhibits a very high intrinsic GTPase hydrolysis rate. Involved in the addition of a carboxymethylaminomethyl (cmnm) group at the wobble position (U34) of certain tRNAs, forming tRNA-cmnm(5)s(2)U34. This is tRNA modification GTPase MnmE from Photobacterium profundum (strain SS9).